A 391-amino-acid chain; its full sequence is GTPase Obg (391 aa).

One can recognise an Obg domain in the interval 1 to 159 (MKFIDEALIR…RDLLLELMLL (159 aa)). The region spanning 160-333 (ADVGMLGLPN…LTRDIMDFIE (174 aa)) is the OBG-type G domain. GTP contacts are provided by residues 166–173 (GLPNAGKS), 191–195 (FTTLV), 213–216 (DIPG), 283–286 (NKID), and 314–316 (SAA). S173 and T193 together coordinate Mg(2+).

This sequence belongs to the TRAFAC class OBG-HflX-like GTPase superfamily. OBG GTPase family. In terms of assembly, monomer. Requires Mg(2+) as cofactor.

It localises to the cytoplasm. Its function is as follows. An essential GTPase which binds GTP, GDP and possibly (p)ppGpp with moderate affinity, with high nucleotide exchange rates and a fairly low GTP hydrolysis rate. Plays a role in control of the cell cycle, stress response, ribosome biogenesis and in those bacteria that undergo differentiation, in morphogenesis control. The chain is GTPase Obg from Haemophilus ducreyi (strain 35000HP / ATCC 700724).